The chain runs to 480 residues: Glutamyl-tRNA(Gln) amidotransferase subunit A (480 aa).

Catalysis depends on charge relay system residues Lys70 and Ser145. The active-site Acyl-ester intermediate is Ser169.

The protein belongs to the amidase family. GatA subfamily. Heterotrimer of A, B and C subunits.

The enzyme catalyses L-glutamyl-tRNA(Gln) + L-glutamine + ATP + H2O = L-glutaminyl-tRNA(Gln) + L-glutamate + ADP + phosphate + H(+). Functionally, allows the formation of correctly charged Gln-tRNA(Gln) through the transamidation of misacylated Glu-tRNA(Gln) in organisms which lack glutaminyl-tRNA synthetase. The reaction takes place in the presence of glutamine and ATP through an activated gamma-phospho-Glu-tRNA(Gln). This is Glutamyl-tRNA(Gln) amidotransferase subunit A from Lactobacillus delbrueckii subsp. bulgaricus (strain ATCC BAA-365 / Lb-18).